Consider the following 453-residue polypeptide: GTPase Der (453 aa).

2 consecutive EngA-type G domains span residues Pro-4–Gly-169 and Thr-177–Gln-352. GTP-binding positions include Gly-10 to Ser-17, Asp-57 to Leu-61, Asn-120 to Glu-123, Gly-183 to Ser-190, Asp-230 to Ile-234, and Asn-295 to Asp-298. The 86-residue stretch at Arg-353–Lys-438 folds into the KH-like domain.

The protein belongs to the TRAFAC class TrmE-Era-EngA-EngB-Septin-like GTPase superfamily. EngA (Der) GTPase family. Associates with the 50S ribosomal subunit.

Its function is as follows. GTPase that plays an essential role in the late steps of ribosome biogenesis. This Trichodesmium erythraeum (strain IMS101) protein is GTPase Der.